Here is a 359-residue protein sequence, read N- to C-terminus: 4-galactosyl-N-acetylglucosaminide 3-alpha-L-fucosyltransferase 9 (359 aa).

The Cytoplasmic portion of the chain corresponds to methionine 1 to proline 11. Residues phenylalanine 12–proline 32 form a helical; Signal-anchor for type II membrane protein membrane-spanning segment. Residues threonine 33 to asparagine 359 lie on the Lumenal side of the membrane. The N-linked (GlcNAc...) asparagine glycan is linked to asparagine 62. An acceptor-binding region spans residues glutamate 63 to tyrosine 168. Glutamine 75 lines the a beta-D-galactosyl-(1-&gt;4)-N-acetyl-beta-D-glucosaminyl derivative pocket. Cystine bridges form between cysteine 82–cysteine 335, cysteine 91–cysteine 338, and cysteine 190–cysteine 238. Asparagine 101 is a glycosylation site (N-linked (GlcNAc...) asparagine). Position 137 (glutamate 137) interacts with a beta-D-galactosyl-(1-&gt;4)-N-acetyl-beta-D-glucosaminyl derivative. Residue glutamate 137 is the Nucleophile of the active site. Residue glutamate 137 coordinates GDP-beta-L-fucose. An N-linked (GlcNAc...) asparagine glycan is attached at asparagine 153. 11 residues coordinate GDP-beta-L-fucose: tyrosine 168, valine 192, serine 194, asparagine 195, arginine 202, valine 226, tyrosine 241, asparagine 246, tyrosine 252, glutamate 255, and lysine 256. The donor-binding stretch occupies residues glycine 169–leucine 326. The interval proline 327–asparagine 359 is acceptor-binding.

The protein belongs to the glycosyltransferase 10 family. As to quaternary structure, homodimer. In terms of processing, N-glycosylated with complex-type N-glycans.

It is found in the golgi apparatus. The protein resides in the trans-Golgi network membrane. Its subcellular location is the golgi apparatus membrane. It catalyses the reaction a beta-D-galactosyl-(1-&gt;4)-N-acetyl-beta-D-glucosaminyl derivative + GDP-beta-L-fucose = a beta-D-galactosyl-(1-&gt;4)-[alpha-L-fucosyl-(1-&gt;3)]-N-acetyl-beta-D-glucosaminyl derivative + GDP + H(+). The catalysed reaction is an alpha-Neu5Ac-(2-&gt;3)-beta-D-Gal-(1-&gt;4)-beta-D-GlcNAc-(1-&gt;3)-beta-D-Gal-(1-&gt;4)-beta-D-GlcNAc derivative + GDP-beta-L-fucose = an alpha-Neu5Ac-(2-&gt;3)-beta-D-Gal-(1-&gt;4)-beta-D-GlcNAc-(1-&gt;3)-beta-D-Gal-(1-&gt;4)-[alpha-L-Fuc-(1-&gt;3)]-beta-D-GlcNAc derivative + GDP + H(+). The enzyme catalyses alpha-N-glycoloylneuraminosyl-(2-&gt;3)-beta-D-galactosyl-(1-&gt;4)-N-acetyl-beta-D-glucosaminyl-(1-&gt;3)-beta-D-galactosyl-(1-&gt;4)-N-acetyl-beta-D-glucosaminyl-(1-&gt;3)-beta-D-galactosyl-(1-&gt;4)-beta-D-glucosyl-(1&lt;-&gt;1')-ceramide + GDP-beta-L-fucose = alpha-N-glycoloylneuraminosyl-(2-&gt;3)-beta-D-galactosyl-(1-&gt;4)-N-acetyl-beta-D-glucosaminyl-(1-&gt;3)-beta-D-galactosyl-(1-&gt;4)-[alpha-L-fucosyl-(1-&gt;3)]-N-acetyl-beta-D-glucosaminyl-(1-&gt;3)-beta-D-galactosyl-(1-&gt;4)-beta-D-glucosyl-(1&lt;-&gt;1')-ceramide + GDP + H(+). It carries out the reaction alpha-D-galactosyl-(1-&gt;3)-beta-D-galactosyl-(1-&gt;4)-N-acetyl-beta-D-glucosaminyl-(1-&gt;3)-beta-D-galactosyl-(1-&gt;4)-beta-D-glucosyl-(1&lt;-&gt;1')-ceramide + GDP-beta-L-fucose = a neolactoside IV(3)-alpha-Gal,III(3)-alpha-Fuc-nLc4Cer + GDP + H(+). It catalyses the reaction a neolactoside nLc4Cer + GDP-beta-L-fucose = a neolactoside III(3)-alpha-Fuc-nLc4Cer + GDP + H(+). The catalysed reaction is an N-acetyl-alpha-neuraminyl-(2-&gt;3)-beta-D-galactosyl-(1-&gt;4)-N-acetyl-beta-D-glucosaminyl derivative + GDP-beta-L-fucose = an alpha-Neu5Ac-(2-&gt;3)-beta-D-Gal-(1-&gt;4)-[alpha-L-Fuc-(1-&gt;3)]-beta-D-GlcNAc derivative + GDP + H(+). The enzyme catalyses beta-D-Gal-(1-&gt;4)-beta-D-GlcNAc-(1-&gt;3)-beta-D-Gal-(1-&gt;4)-D-Glc + GDP-beta-L-fucose = beta-D-Gal-(1-&gt;4)-[alpha-L-Fuc-(1-&gt;3)]-beta-D-GlcNAc-(1-&gt;3)-beta-D-Gal-(1-&gt;4)-D-Glc + GDP + H(+). It carries out the reaction an alpha-L-Fuc-(1-&gt;2)-beta-D-Gal-(1-&gt;4)-beta-D-GlcNAc derivative + GDP-beta-L-fucose = an alpha-L-Fuc-(1-&gt;2)-beta-D-Gal-(1-&gt;4)-[alpha-L-Fuc-(1-&gt;3)]-beta-D-GlcNAc derivative + GDP + H(+). Its pathway is protein modification; protein glycosylation. It functions in the pathway glycolipid biosynthesis. Its activity is regulated as follows. Activated by Mn2+. Functionally, catalyzes alpha(1-&gt;3) linkage of fucosyl moiety transferred from GDP-beta-L-fucose to N-acetyl glucosamine (GlcNAc) within type 2 lactosamine (LacNAc, beta-D-Gal-(1-&gt;4)-beta-D-GlcNAc-) glycan attached to glycolipids and N- or O-linked glycoproteins. Fucosylates distal type 2 LacNAc and its fucosylated (H-type 2 LacNAc) and sialylated (sialyl-type 2 LacNAc) derivatives to form Lewis x (Lex) (CD15) and Lewis y (Ley) antigenic epitopes involved in cell adhesion and differentiation. Generates Lex epitopes in the brain, presumably playing a role in the maintenance of neuronal stemness and neurite outgrowth in progenitor neural cells. Fucosylates the internal type 2 LacNAc unit of the polylactosamine chain to form VIM-2 antigen that serves as recognition epitope for SELE. Can also modify milk oligosaccharides in particular type 2 tetrasaccharide LNnT. The polypeptide is 4-galactosyl-N-acetylglucosaminide 3-alpha-L-fucosyltransferase 9 (Canis lupus familiaris (Dog)).